We begin with the raw amino-acid sequence, 327 residues long: Phenylalanine--tRNA ligase alpha subunit (327 aa).

E252 serves as a coordination point for Mg(2+).

The protein belongs to the class-II aminoacyl-tRNA synthetase family. Phe-tRNA synthetase alpha subunit type 1 subfamily. As to quaternary structure, tetramer of two alpha and two beta subunits. The cofactor is Mg(2+).

It localises to the cytoplasm. It catalyses the reaction tRNA(Phe) + L-phenylalanine + ATP = L-phenylalanyl-tRNA(Phe) + AMP + diphosphate + H(+). The protein is Phenylalanine--tRNA ligase alpha subunit of Glaesserella parasuis serovar 5 (strain SH0165) (Haemophilus parasuis).